The chain runs to 243 residues: UMP-CMP kinase 2 (243 aa).

An ATP-binding site is contributed by 69 to 74 (GSGKGT). An NMP region spans residues 89–118 (SAGDLLRSEISTGREKGELILNIIKEGKIV). Residues Arg95, 116 to 118 (KIV), and 143 to 146 (GFPR) contribute to the a ribonucleoside 5'-phosphate site. Asn150 is a binding site for CMP. Residues 181 to 189 (GRNQGRVDD) are LID. Arg182 is an ATP binding site. Residues Arg186 and Arg197 each contribute to the a ribonucleoside 5'-phosphate site.

It belongs to the adenylate kinase family. UMP-CMP kinase subfamily. In terms of assembly, monomer. It depends on Mg(2+) as a cofactor.

Its subcellular location is the cytoplasm. It localises to the nucleus. The enzyme catalyses UMP + ATP = UDP + ADP. The catalysed reaction is CMP + ATP = CDP + ADP. It carries out the reaction dCMP + ATP = dCDP + ADP. Functionally, catalyzes the phosphorylation of pyrimidine nucleoside monophosphates at the expense of ATP. Plays an important role in de novo pyrimidine nucleotide biosynthesis. Has preference for UMP and CMP as phosphate acceptors. The chain is UMP-CMP kinase 2 from Oryza sativa subsp. japonica (Rice).